The following is a 279-amino-acid chain: MALSFSKYHGLGNDFILVDNRQSTEPCLTPDQAQQLCDRHFGIGADGVIFALPGQGGTDYTMRIFNSDGSEPEMCGNGIRCLAKFLADLEGVEEKTYRIHTLAGVITPQLLADGQVKVDMGEPQLLAELIPTTLAPAGEKVVDLPLAVAGQTWAVTCVSMGNPHCLTFVDDVDSLNLTEIGPLFEHHPQFSQRTNTEFIQVLGSDRLKMRVWERGAGITLACGTGACATVVAAVLTGRGDRRCTVELPGGNLEIEWSAQDNRLYMTGPAQRVFSGQAEI.

The substrate site is built by Asn13 and Asn66. The Proton donor role is filled by Cys75. Substrate-binding positions include 76–77, Asn162, Asn195, and 213–214; these read GN and ER. Cys222 serves as the catalytic Proton acceptor. 223–224 serves as a coordination point for substrate; sequence GT.

The protein belongs to the diaminopimelate epimerase family. As to quaternary structure, homodimer.

It localises to the cytoplasm. The enzyme catalyses (2S,6S)-2,6-diaminopimelate = meso-2,6-diaminopimelate. It participates in amino-acid biosynthesis; L-lysine biosynthesis via DAP pathway; DL-2,6-diaminopimelate from LL-2,6-diaminopimelate: step 1/1. In terms of biological role, catalyzes the stereoinversion of LL-2,6-diaminopimelate (L,L-DAP) to meso-diaminopimelate (meso-DAP), a precursor of L-lysine and an essential component of the bacterial peptidoglycan. In Synechocystis sp. (strain ATCC 27184 / PCC 6803 / Kazusa), this protein is Diaminopimelate epimerase.